The following is a 159-amino-acid chain: Serine-protein kinase RsbW (159 aa).

This sequence belongs to the anti-sigma-factor family.

It carries out the reaction L-seryl-[protein] + ATP = O-phospho-L-seryl-[protein] + ADP + H(+). It catalyses the reaction L-threonyl-[protein] + ATP = O-phospho-L-threonyl-[protein] + ADP + H(+). Negative regulator of sigma-B activity. Phosphorylates and inactivates its specific antagonist protein, RsbV. Upon phosphorylation of RsbV, RsbW is released and binds to sigma-B, thereby blocking its ability to form an RNA polymerase holoenzyme (E-sigma-B). This chain is Serine-protein kinase RsbW, found in Staphylococcus aureus (strain Newman).